A 264-amino-acid chain; its full sequence is Thymidylate synthase (264 aa).

Arginine 21 serves as a coordination point for dUMP. (6R)-5,10-methylene-5,6,7,8-tetrahydrofolate is bound at residue histidine 51. 126-127 (RR) serves as a coordination point for dUMP. Cysteine 146 acts as the Nucleophile in catalysis. Residues 166–169 (RSCD), asparagine 177, and 207–209 (HLY) each bind dUMP. Aspartate 169 serves as a coordination point for (6R)-5,10-methylene-5,6,7,8-tetrahydrofolate. Alanine 263 serves as a coordination point for (6R)-5,10-methylene-5,6,7,8-tetrahydrofolate.

It belongs to the thymidylate synthase family. Bacterial-type ThyA subfamily. Homodimer.

Its subcellular location is the cytoplasm. It catalyses the reaction dUMP + (6R)-5,10-methylene-5,6,7,8-tetrahydrofolate = 7,8-dihydrofolate + dTMP. It functions in the pathway pyrimidine metabolism; dTTP biosynthesis. Its function is as follows. Catalyzes the reductive methylation of 2'-deoxyuridine-5'-monophosphate (dUMP) to 2'-deoxythymidine-5'-monophosphate (dTMP) while utilizing 5,10-methylenetetrahydrofolate (mTHF) as the methyl donor and reductant in the reaction, yielding dihydrofolate (DHF) as a by-product. This enzymatic reaction provides an intracellular de novo source of dTMP, an essential precursor for DNA biosynthesis. This is Thymidylate synthase from Shigella boydii serotype 4 (strain Sb227).